The following is a 352-amino-acid chain: MSRRFNPLEDPPSASSSDEEGKEIARNSSSDDEDDVSSENPSPLKTTLDAVSDSESGSDEETDSDSELEKKKDQVVTNPVDVKRAKKVKTSEKSGAKRSLEVDEAAVSMDVKRAKKVSGEEEKKKSGGGGEETKKTYFQRLWTEDDEIVVLQGLIDDKKDTGVSNTNKVYELVKKSISFDVSKNQLMEKLRALKKKYENNLGKAKDGVEPTFVKPHDRKAFELSKLVWGGIRMALASGMKSNEKSKKSSKFESVKHELDSSLPNSKNNCEDEVMDEGEVSFTKSSLVRSIVGLGMDELTAQQGLSKLASKDMKRFYEQWKAMQAREFEFFLQKHGFLFEVLSKISEAFGSNA.

Disordered stretches follow at residues 1-132 (MSRR…GGEE) and 239-269 (MKSNEKSKKSSKFESVKHELDSSLPNSKNNC). The span at 56–66 (SGSDEETDSDS) shows a compositional bias: acidic residues. Basic and acidic residues-rich tracts occupy residues 89–101 (KTSEKSGAKRSLE), 117–132 (VSGEEEKKKSGGGGEE), and 241–259 (SNEKSKKSSKFESVKHELD).

This sequence belongs to the GeBP family.

The polypeptide is Probable transcription factor At1g11510 (Arabidopsis thaliana (Mouse-ear cress)).